Here is a 243-residue protein sequence, read N- to C-terminus: MEFEDDAFVLAARAHGETGAIVELLTSAHGRYAAHVAGGASRKVRPFLQPGARVIARYRARVSDQLGSAAIEPVGEGPAALFDDPLALSGLSAAAAVAAGALPEREPHPGAFLAFEALTGALTHPDVWPAVFVRFEAGLLQDLGFGLDLSKCAATGITDDLVWVSPRTGRAVSRQAGEPYKDRLLALPPFLLSAQGGLRAGDVAAGLALTGHFLEAFIFGPLNRPLPPARLWLLDRLSEAGRL.

Belongs to the RecO family.

Involved in DNA repair and RecF pathway recombination. The polypeptide is DNA repair protein RecO (Phenylobacterium zucineum (strain HLK1)).